A 447-amino-acid chain; its full sequence is Cysteine--tRNA ligase (447 aa).

Cys28 provides a ligand contact to Zn(2+). The short motif at 30–40 (PTVYNYIHIGN) is the 'HIGH' region element. Zn(2+) contacts are provided by Cys211, His236, and Glu240. The 'KMSKS' region motif lies at 268 to 272 (KMSKS). Lys271 lines the ATP pocket.

The protein belongs to the class-I aminoacyl-tRNA synthetase family. As to quaternary structure, monomer. Zn(2+) is required as a cofactor.

It localises to the cytoplasm. It catalyses the reaction tRNA(Cys) + L-cysteine + ATP = L-cysteinyl-tRNA(Cys) + AMP + diphosphate. In Streptococcus pyogenes serotype M1, this protein is Cysteine--tRNA ligase.